Here is a 389-residue protein sequence, read N- to C-terminus: Leucine aminopeptidase 1 (389 aa).

Residues 1-18 (MKSAALLLPLYTAAFAAA) form the signal peptide. The propeptide occupies 19 to 89 (AFHHEHAQAV…TLNHRINAES (71 aa)). 3 N-linked (GlcNAc...) asparagine glycosylation sites follow: Asn-99, Asn-146, and Asn-156. Zn(2+) contacts are provided by His-188, Asp-207, Glu-246, and Asp-273. A disulfide bridge connects residues Cys-322 and Cys-326. His-355 is a binding site for Zn(2+).

This sequence belongs to the peptidase M28 family. M28E subfamily. In terms of assembly, monomer. The cofactor is Zn(2+).

The protein resides in the secreted. Functionally, extracellular aminopeptidase that allows assimilation of proteinaceous substrates. The chain is Leucine aminopeptidase 1 (lap1) from Pyrenophora tritici-repentis (strain Pt-1C-BFP) (Wheat tan spot fungus).